A 356-amino-acid polypeptide reads, in one-letter code: Ferrochelatase (356 aa).

2 residues coordinate Fe cation: histidine 214 and glutamate 295.

The protein belongs to the ferrochelatase family.

Its subcellular location is the cytoplasm. It catalyses the reaction heme b + 2 H(+) = protoporphyrin IX + Fe(2+). It participates in porphyrin-containing compound metabolism; protoheme biosynthesis; protoheme from protoporphyrin-IX: step 1/1. Its function is as follows. Catalyzes the ferrous insertion into protoporphyrin IX. This is Ferrochelatase from Paraburkholderia phymatum (strain DSM 17167 / CIP 108236 / LMG 21445 / STM815) (Burkholderia phymatum).